Here is a 90-residue protein sequence, read N- to C-terminus: Small ribosomal subunit protein bS18 (90 aa).

The protein belongs to the bacterial ribosomal protein bS18 family. Part of the 30S ribosomal subunit. Forms a tight heterodimer with protein bS6.

In terms of biological role, binds as a heterodimer with protein bS6 to the central domain of the 16S rRNA, where it helps stabilize the platform of the 30S subunit. This chain is Small ribosomal subunit protein bS18, found in Bacteroides fragilis (strain YCH46).